We begin with the raw amino-acid sequence, 200 residues long: NADH-quinone oxidoreductase subunit B (200 aa).

4 residues coordinate [4Fe-4S] cluster: cysteine 78, cysteine 79, cysteine 144, and cysteine 174.

The protein belongs to the complex I 20 kDa subunit family. In terms of assembly, NDH-1 is composed of 14 different subunits. Subunits NuoB, C, D, E, F, and G constitute the peripheral sector of the complex. [4Fe-4S] cluster is required as a cofactor.

It localises to the cell membrane. The catalysed reaction is a quinone + NADH + 5 H(+)(in) = a quinol + NAD(+) + 4 H(+)(out). Functionally, NDH-1 shuttles electrons from NADH, via FMN and iron-sulfur (Fe-S) centers, to quinones in the respiratory chain. The immediate electron acceptor for the enzyme in this species is believed to be ubiquinone. Couples the redox reaction to proton translocation (for every two electrons transferred, four hydrogen ions are translocated across the cytoplasmic membrane), and thus conserves the redox energy in a proton gradient. The chain is NADH-quinone oxidoreductase subunit B from Dehalococcoides mccartyi (strain CBDB1).